Consider the following 657-residue polypeptide: Interferon-induced GTP-binding protein Mx1 (657 aa).

Met1 bears the N-acetylmethionine mark. One can recognise a Dynamin-type G domain in the interval 63–336 (DLALPAIAVI…LITHICKTLP (274 aa)). Residues 73–80 (GDQSSGKS) form a G1 motif region. Residue 73–80 (GDQSSGKS) participates in GTP binding. Residues 98 to 100 (VTR) form a G2 motif region. The G3 motif stretch occupies residues 174 to 177 (DLPG). Residues 174–178 (DLPGI) and 243–246 (TKPD) contribute to the GTP site. A G4 motif region spans residues 243–246 (TKPD). The segment at 275 to 278 (KCRG) is G5 motif. Residues 337–362 (LLENQIKENHEKITEELQKYGSDVPE) are bundle signaling element (BSE). The middle domain stretch occupies residues 362 to 529 (EDEHEKMFFL…HFQMEQIVYC (168 aa)). The tract at residues 363-627 (DEHEKMFFLI…KDTYSWLLKE (265 aa)) is stalk. Positions 540–551 (RVREKDSDEEKK) are enriched in basic and acidic residues. The disordered stretch occupies residues 540-559 (RVREKDSDEEKKKKTSSMSH). A critical for lipid-binding region spans residues 550-553 (KKKK). Positions 569-657 (LSEILEHLLA…ARRRLAKFPG (89 aa)) constitute a GED domain.

It belongs to the TRAFAC class dynamin-like GTPase superfamily. Dynamin/Fzo/YdjA family. In terms of assembly, homooligomer. Oligomerizes into multimeric filamentous or ring-like structures by virtue of its stalk domain. Oligomerization is critical for GTPase activity, protein stability, and recognition of viral target structures. Interacts with TRPC1, TRPC3, TRPC4, TRPC5, TRPC6 and TRPC7. Interacts with HSPA5. Interacts with TUBB/TUBB5. Interacts with DDX39A and DDX39B. ISGylated.

The protein localises to the cytoplasm. The protein resides in the endoplasmic reticulum membrane. It localises to the perinuclear region. Interferon-induced dynamin-like GTPase with antiviral activity. The polypeptide is Interferon-induced GTP-binding protein Mx1 (MX1) (Canis lupus familiaris (Dog)).